A 351-amino-acid polypeptide reads, in one-letter code: Soluble interferon alpha/beta receptor OPG204 (351 aa).

The first 23 residues, 1–23 (MKMKMMVRIYFVSLSLLLFHSYA), serve as a signal peptide directing secretion. Ig-like C2-type domains follow at residues 65-137 (LGEP…KNGD) and 155-237 (PKTY…IVVS). Cystine bridges form between C73–C129 and C172–C221. Residues N117, N182, N261, N269, and N321 are each glycosylated (N-linked (GlcNAc...) asparagine; by host). The 100-residue stretch at 246-345 (PSQDHRFKLI…HNYYFDKTLT (100 aa)) folds into the Ig-like V-type domain. Residues C272 and C333 are joined by a disulfide bond.

Belongs to the interleukin-1 receptor family. Interacts with host IFNA1.

Its subcellular location is the secreted. In terms of biological role, counteracts the antiviral effects of host IFN-alpha/beta and key IFN-inducible proteins involved in viral RNA degradation suxh as host OAS1. Acts as a soluble IFN-alpha receptor and thus inhibits the interaction between host IFN-alpha and its receptor. This chain is Soluble interferon alpha/beta receptor OPG204 (OPG204), found in Cynomys gunnisoni (Gunnison's prairie dog).